The chain runs to 590 residues: Aspartate--tRNA(Asp/Asn) ligase (590 aa).

Position 172 (E172) interacts with L-aspartate. Residues 196-199 (QLFK) form an aspartate region. Position 218 (R218) interacts with L-aspartate. ATP contacts are provided by residues 218 to 220 (RDE) and Q227. An L-aspartate-binding site is contributed by H449. An ATP-binding site is contributed by E484. R491 contacts L-aspartate. Position 536–539 (536–539 (GVDR)) interacts with ATP.

This sequence belongs to the class-II aminoacyl-tRNA synthetase family. Type 1 subfamily. In terms of assembly, homodimer.

Its subcellular location is the cytoplasm. The enzyme catalyses tRNA(Asx) + L-aspartate + ATP = L-aspartyl-tRNA(Asx) + AMP + diphosphate. Aspartyl-tRNA synthetase with relaxed tRNA specificity since it is able to aspartylate not only its cognate tRNA(Asp) but also tRNA(Asn). Reaction proceeds in two steps: L-aspartate is first activated by ATP to form Asp-AMP and then transferred to the acceptor end of tRNA(Asp/Asn). The polypeptide is Aspartate--tRNA(Asp/Asn) ligase (Francisella tularensis subsp. holarctica (strain FTNF002-00 / FTA)).